We begin with the raw amino-acid sequence, 630 residues long: Adagio-like protein 3 (630 aa).

The PAS domain maps to 54–126 (EDEAAAWEGR…PLVDPMVVSE (73 aa)). An S-4a-FMN cysteine modification is found at cysteine 102. One can recognise an F-box domain in the interval 220-268 (YCCILQLSDEVLAHNILSRLSPRDVASIGSVCTRMHELTKNDHLRKMVC). Kelch repeat units lie at residues 380 to 430 (SWLV…CTLD), 432 to 483 (SKLV…SVFG), 485 to 537 (TKLF…RLDH), 545 to 597 (GRII…CVVG), and 599 to 629 (TRVLVLGGHTGEEWILNELHELCLASRPDED).

It belongs to the ADAGIO family. Post-translationally, FMN binds covalently to cysteine after exposure to blue light and is reversed in the dark.

The protein localises to the nucleus. It participates in protein modification; protein ubiquitination. Its function is as follows. Component of an E3 ubiquitin ligase complex that plays a central role in blue light-dependent circadian cycles. Acts as a blue light photoreceptor, due to the presence of FMN, that mediates light-regulated protein degradation of critical clock components by targeting them to the proteasome complex. The SCF(ADO3) E3 ubiquitin ligase complex is involved in the regulation of circadian clock-dependent processes including transition to flowering time, hypocotyl elongation, cotyledons and leaf movement rhythms. The protein is Adagio-like protein 3 of Oryza sativa subsp. japonica (Rice).